The primary structure comprises 312 residues: Pre-mRNA-splicing factor 38A (312 aa).

Residues 1-179 are N-terminal protein interaction domain; the sequence is MANRTVKDAH…VLEETEQLDP (179 aa). Positions 180-312 are disordered; the sequence is RVSALEEDMD…SHKKSRRGNE (133 aa). A compositionally biased stretch (acidic residues) spans 184 to 201; sequence LEEDMDDVESSEEEEDDD. Positions 202-223 are enriched in basic and acidic residues; it reads EKGRDPSPEHHRRNYRDLDRPR. Composition is skewed to basic residues over residues 224-294 and 301-312; these read RSPS…RSHS and KKSHKKSRRGNE.

Belongs to the PRP38 family. As to quaternary structure, component of the spliceosome B complex.

It localises to the nucleus. In terms of biological role, involved in pre-mRNA splicing as a component of the spliceosome. The sequence is that of Pre-mRNA-splicing factor 38A (prpf38a) from Xenopus laevis (African clawed frog).